The chain runs to 309 residues: Homoserine O-succinyltransferase (309 aa).

The active-site Acyl-thioester intermediate is the C142. Positions 163 and 192 each coordinate substrate. The active-site Proton acceptor is H235. The active site involves E237. R249 provides a ligand contact to substrate.

This sequence belongs to the MetA family.

It is found in the cytoplasm. It carries out the reaction L-homoserine + succinyl-CoA = O-succinyl-L-homoserine + CoA. It participates in amino-acid biosynthesis; L-methionine biosynthesis via de novo pathway; O-succinyl-L-homoserine from L-homoserine: step 1/1. Its function is as follows. Transfers a succinyl group from succinyl-CoA to L-homoserine, forming succinyl-L-homoserine. The chain is Homoserine O-succinyltransferase from Yersinia enterocolitica serotype O:8 / biotype 1B (strain NCTC 13174 / 8081).